Here is a 290-residue protein sequence, read N- to C-terminus: 4-hydroxybenzoate octaprenyltransferase (290 aa).

7 helical membrane passes run 33-53, 99-119, 141-161, 163-183, 213-233, 237-257, and 268-288; these read LWALWVATPGVPPLWILAVFV, LFVVLVLLAFLLVLTLNTMTI, LPQVVLGAAFGWSIPMAFAAV, ESVPLSCWLMFLANILWAVAY, FIIGVLQIGVMVLMALIGWLN, WGYYWSILVAGGLFVYQQKLI, and AFMNNNYVGLVLFLGLAMSYW.

It belongs to the UbiA prenyltransferase family. Mg(2+) serves as cofactor.

The protein resides in the cell inner membrane. The catalysed reaction is all-trans-octaprenyl diphosphate + 4-hydroxybenzoate = 4-hydroxy-3-(all-trans-octaprenyl)benzoate + diphosphate. It functions in the pathway cofactor biosynthesis; ubiquinone biosynthesis. Functionally, catalyzes the prenylation of para-hydroxybenzoate (PHB) with an all-trans polyprenyl group. Mediates the second step in the final reaction sequence of ubiquinone-8 (UQ-8) biosynthesis, which is the condensation of the polyisoprenoid side chain with PHB, generating the first membrane-bound Q intermediate 3-octaprenyl-4-hydroxybenzoate. The sequence is that of 4-hydroxybenzoate octaprenyltransferase from Escherichia fergusonii (strain ATCC 35469 / DSM 13698 / CCUG 18766 / IAM 14443 / JCM 21226 / LMG 7866 / NBRC 102419 / NCTC 12128 / CDC 0568-73).